The following is a 216-amino-acid chain: DPLRAKFIAENFLEDAVCFNEVRNMFGYTGTYKGERISVMGTGMGMPSISIYARELIVDYGVKKLIRVGTAGSLNENVHVRELVLAQAAATNSNIIRNDWPQYDFPQIASFNLLDKAYHIAKNFGMTTHVGNVLSSDEKYSNYFEKNIELGKWGVKAVEMEAAALYYLAAQHQVDALAIMTISDSLVNPDEDTTAEERQNTFTDMMKVGLETLIAD.

Phosphate contacts are provided by residues R4, R23, and 67-70 (RVGT). A purine D-ribonucleoside contacts are provided by residues 159-161 (EME) and 183-184 (SD). Residue D184 is the Proton donor of the active site.

Belongs to the PNP/UDP phosphorylase family. As to quaternary structure, homohexamer; trimer of homodimers.

It catalyses the reaction a purine D-ribonucleoside + phosphate = a purine nucleobase + alpha-D-ribose 1-phosphate. The enzyme catalyses a purine 2'-deoxy-D-ribonucleoside + phosphate = a purine nucleobase + 2-deoxy-alpha-D-ribose 1-phosphate. In terms of biological role, catalyzes the reversible phosphorolytic breakdown of the N-glycosidic bond in the beta-(deoxy)ribonucleoside molecules, with the formation of the corresponding free purine bases and pentose-1-phosphate. This Streptococcus thermophilus protein is Purine nucleoside phosphorylase DeoD-type.